The chain runs to 199 residues: Recombination protein RecR (199 aa).

Residues Cys56–Cys71 form a C4-type zinc finger. Residues Ser79 to Pro174 form the Toprim domain.

The protein belongs to the RecR family.

Functionally, may play a role in DNA repair. It seems to be involved in an RecBC-independent recombinational process of DNA repair. It may act with RecF and RecO. The polypeptide is Recombination protein RecR (Frankia casuarinae (strain DSM 45818 / CECT 9043 / HFP020203 / CcI3)).